A 122-amino-acid polypeptide reads, in one-letter code: Large ribosomal subunit protein uL14 (122 aa).

It belongs to the universal ribosomal protein uL14 family. In terms of assembly, part of the 50S ribosomal subunit. Forms a cluster with proteins L3 and L19. In the 70S ribosome, L14 and L19 interact and together make contacts with the 16S rRNA in bridges B5 and B8.

In terms of biological role, binds to 23S rRNA. Forms part of two intersubunit bridges in the 70S ribosome. This is Large ribosomal subunit protein uL14 from Shewanella loihica (strain ATCC BAA-1088 / PV-4).